The sequence spans 284 residues: Agamous-like MADS-box protein AGL49 (284 aa).

Residues 1-20 form a disordered region; sequence MAPRQKKPNKSDDDDGDLHR. Residues 21 to 66 enclose the MADS-box domain; the sequence is KKQSFFKQRFPGFKKKASELSVLCGNSVGFICYGPDNDLHVWPQSQ.

As to quaternary structure, interacts with MEE14/CBP1.

Its subcellular location is the nucleus. In terms of biological role, probable transcription factor that may function in the maintenance of the proper function of the central cell in pollen tube attraction. The chain is Agamous-like MADS-box protein AGL49 from Arabidopsis thaliana (Mouse-ear cress).